We begin with the raw amino-acid sequence, 1767 residues long: Endo-alpha-N-acetylgalactosaminidase (1767 aa).

The first 39 residues, 1 to 39 (MNKGLFEKRCKYSIRKFSLGVASVMIGATFFGTSPVLAD), serve as a signal peptide directing secretion. 2 stretches are compositionally biased toward basic and acidic residues: residues 63–75 (NDGHDFEAPKVGE) and 84–111 (DGPKTEEELLALEKEKPAEEKPKEDKPA). Disordered regions lie at residues 63 to 137 (NDGH…QGTV) and 301 to 324 (VKTDNQEGVKTEDTPAEKETGPEV). Over residues 112–124 (AAKPETPKTVTPE) the composition is skewed to low complexity. Composition is skewed to basic and acidic residues over residues 127–137 (TVEKKEQQGTV) and 304–324 (DNQEGVKTEDTPAEKETGPEV). 5 residues coordinate Ca(2+): Asp577, Asn579, Asp581, Lys583, and Asp588. Residues 602–893 (GWKKVKDITA…DVMTKYFQHF (292 aa)) form a catalytic region. Residue Asp658 coordinates substrate. Asp764 acts as the Nucleophile in catalysis. Glu796 (proton donor/acceptor) is an active-site residue. Residues Asp1233, Glu1235, Glu1281, Trp1284, and Asp1411 each contribute to the Ca(2+) site. Residues 1735-1739 (LPATG) carry the LPXTG sorting signal motif. Pentaglycyl murein peptidoglycan amidated threonine is present on Thr1738. Positions 1739–1767 (GESQFDTALFLASVSLALSALFVVKTKKD) are cleaved as a propeptide — removed by sortase.

Belongs to the glycosyl hydrolase 101 family. A subfamily.

The protein localises to the secreted. It localises to the cell wall. It catalyses the reaction a 3-O-[beta-D-galactosyl-(1-&gt;3)-N-acetyl-alpha-D-galactosaminyl]-L-threonyl-[protein] + H2O = beta-D-galactosyl-(1-&gt;3)-N-acetyl-D-galactosamine + L-threonyl-[protein]. It carries out the reaction a 3-O-[beta-D-galactosyl-(1-&gt;3)-N-acetyl-alpha-D-galactosaminyl]-L-seryl-[protein] + H2O = beta-D-galactosyl-(1-&gt;3)-N-acetyl-D-galactosamine + L-seryl-[protein]. Involved in the breakdown of mucin-type O-linked glycans. Specifically removes the T-antigen disaccharide (Gal-beta-1,3-GalNAc-alpha) from extracellular host glycoproteins. Representative of a broadly important class of virulence factors. The protein is Endo-alpha-N-acetylgalactosaminidase of Streptococcus pneumoniae (strain ATCC BAA-255 / R6).